A 102-amino-acid polypeptide reads, in one-letter code: UPF0473 protein SAS1551 (102 aa).

Belongs to the UPF0473 family.

The chain is UPF0473 protein SAS1551 from Staphylococcus aureus (strain MSSA476).